Reading from the N-terminus, the 248-residue chain is Geranylgeranylglyceryl phosphate synthase (248 aa).

Positions 25 and 50 each coordinate Mg(2+). Sn-glycerol 1-phosphate contacts are provided by residues 170-176 (YLEAGSG), 201-202 (GG), and 223-224 (GT).

It belongs to the GGGP/HepGP synthase family. Group II subfamily. It depends on Mg(2+) as a cofactor.

It localises to the cytoplasm. The enzyme catalyses sn-glycerol 1-phosphate + (2E,6E,10E)-geranylgeranyl diphosphate = sn-3-O-(geranylgeranyl)glycerol 1-phosphate + diphosphate. The protein operates within membrane lipid metabolism; glycerophospholipid metabolism. Its function is as follows. Prenyltransferase that catalyzes the transfer of the geranylgeranyl moiety of geranylgeranyl diphosphate (GGPP) to the C3 hydroxyl of sn-glycerol-1-phosphate (G1P). This reaction is the first ether-bond-formation step in the biosynthesis of archaeal membrane lipids. This is Geranylgeranylglyceryl phosphate synthase from Methanococcus aeolicus (strain ATCC BAA-1280 / DSM 17508 / OCM 812 / Nankai-3).